A 268-amino-acid polypeptide reads, in one-letter code: Thiazole synthase (268 aa).

The Schiff-base intermediate with DXP role is filled by lysine 96. Residues glycine 157, 185-186, and 207-208 contribute to the 1-deoxy-D-xylulose 5-phosphate site; these read AG and NT. The tract at residues 238 to 268 is disordered; sequence PMRPREAASPSSPVEGVPFTPTGPRPGRGPQ. Residues 258–268 show a composition bias toward pro residues; the sequence is PTGPRPGRGPQ.

This sequence belongs to the ThiG family. Homotetramer. Forms heterodimers with either ThiH or ThiS.

The protein resides in the cytoplasm. The catalysed reaction is [ThiS sulfur-carrier protein]-C-terminal-Gly-aminoethanethioate + 2-iminoacetate + 1-deoxy-D-xylulose 5-phosphate = [ThiS sulfur-carrier protein]-C-terminal Gly-Gly + 2-[(2R,5Z)-2-carboxy-4-methylthiazol-5(2H)-ylidene]ethyl phosphate + 2 H2O + H(+). The protein operates within cofactor biosynthesis; thiamine diphosphate biosynthesis. In terms of biological role, catalyzes the rearrangement of 1-deoxy-D-xylulose 5-phosphate (DXP) to produce the thiazole phosphate moiety of thiamine. Sulfur is provided by the thiocarboxylate moiety of the carrier protein ThiS. In vitro, sulfur can be provided by H(2)S. The protein is Thiazole synthase of Thermus thermophilus (strain ATCC 27634 / DSM 579 / HB8).